A 211-amino-acid chain; its full sequence is Large ribosomal subunit protein uL3 (211 aa).

The protein belongs to the universal ribosomal protein uL3 family. As to quaternary structure, part of the 50S ribosomal subunit. Forms a cluster with proteins L14 and L19.

Its function is as follows. One of the primary rRNA binding proteins, it binds directly near the 3'-end of the 23S rRNA, where it nucleates assembly of the 50S subunit. The polypeptide is Large ribosomal subunit protein uL3 (Trichlorobacter lovleyi (strain ATCC BAA-1151 / DSM 17278 / SZ) (Geobacter lovleyi)).